We begin with the raw amino-acid sequence, 396 residues long: Tryptophan synthase beta chain (396 aa).

Lysine 86 is modified (N6-(pyridoxal phosphate)lysine).

The protein belongs to the TrpB family. As to quaternary structure, tetramer of two alpha and two beta chains. Requires pyridoxal 5'-phosphate as cofactor.

The catalysed reaction is (1S,2R)-1-C-(indol-3-yl)glycerol 3-phosphate + L-serine = D-glyceraldehyde 3-phosphate + L-tryptophan + H2O. Its pathway is amino-acid biosynthesis; L-tryptophan biosynthesis; L-tryptophan from chorismate: step 5/5. In terms of biological role, the beta subunit is responsible for the synthesis of L-tryptophan from indole and L-serine. This Francisella philomiragia subsp. philomiragia (strain ATCC 25017 / CCUG 19701 / FSC 153 / O#319-036) protein is Tryptophan synthase beta chain.